Reading from the N-terminus, the 180-residue chain is Large ribosomal subunit protein uL5 (180 aa).

This sequence belongs to the universal ribosomal protein uL5 family. As to quaternary structure, part of the 50S ribosomal subunit; part of the 5S rRNA/L5/L18/L25 subcomplex. Contacts the 5S rRNA and the P site tRNA. Forms a bridge to the 30S subunit in the 70S ribosome.

Functionally, this is one of the proteins that bind and probably mediate the attachment of the 5S RNA into the large ribosomal subunit, where it forms part of the central protuberance. In the 70S ribosome it contacts protein S13 of the 30S subunit (bridge B1b), connecting the 2 subunits; this bridge is implicated in subunit movement. Contacts the P site tRNA; the 5S rRNA and some of its associated proteins might help stabilize positioning of ribosome-bound tRNAs. The protein is Large ribosomal subunit protein uL5 of Leuconostoc mesenteroides subsp. mesenteroides (strain ATCC 8293 / DSM 20343 / BCRC 11652 / CCM 1803 / JCM 6124 / NCDO 523 / NBRC 100496 / NCIMB 8023 / NCTC 12954 / NRRL B-1118 / 37Y).